A 51-amino-acid polypeptide reads, in one-letter code: MEKRELYELKDNKIVRKRRFCPRCGPGVFLAEHEDRFSCGRCGYTEFKRKN.

Zn(2+)-binding residues include Cys-21, Cys-24, Cys-39, and Cys-42. A C4-type zinc finger spans residues 21 to 42; it reads CPRCGPGVFLAEHEDRFSCGRC.

It belongs to the eukaryotic ribosomal protein eS31 family. As to quaternary structure, part of the 30S ribosomal subunit. Requires Zn(2+) as cofactor.

The protein is Small ribosomal subunit protein eS31 of Picrophilus torridus (strain ATCC 700027 / DSM 9790 / JCM 10055 / NBRC 100828 / KAW 2/3).